The chain runs to 283 residues: Syntaxin VAM3 (283 aa).

Residues 1–26 (MSFFDIEAQSSKGNSQQEPQFSTNQK) form a disordered region. Topologically, residues 1 to 261 (MSFFDIEAQS…ADQHQRDRNK (261 aa)) are cytoplasmic. Over residues 8-25 (AQSSKGNSQQEPQFSTNQ) the composition is skewed to polar residues. 2 coiled-coil regions span residues 28-48 (KELSNLIETFAEQSRVLEKEC) and 84-111 (LIHQNGKLSADFKNLKTKYQSLQQSYNQ). Disordered regions lie at residues 116-146 (FPLKTPISPGTSKERKDIHPRTEAVRQDPES) and 162-182 (NEGQHQLQLQEEQEQQQQGLS). Residues 127–144 (SKERKDIHPRTEAVRQDP) show a composition bias toward basic and acidic residues. Positions 169-189 (QLQEEQEQQQQGLSQEELDFQ) form a coiled coil. The t-SNARE coiled-coil homology domain maps to 190–252 (TIIHQERSQQ…QNANKQLTRA (63 aa)). A helical; Anchor for type IV membrane protein membrane pass occupies residues 262–282 (CGKVTLIIIIVVCMVVLLAVL). Residue Ser283 is a topological domain, vacuolar.

It belongs to the syntaxin family. Associates with VAM7.

Its subcellular location is the vacuole membrane. Required for vacuolar assembly. Provides the t-SNARE function in a late step of the vacuolar assembly. Required for homotypic vacuole membrane fusion, autophagy and fusion of biosynthetic transport vesicles with the vacuole. Required for the delivery of alpha-factor receptor-ligand complexes to the vacuole. The protein is Syntaxin VAM3 (VAM3) of Saccharomyces cerevisiae (strain ATCC 204508 / S288c) (Baker's yeast).